A 741-amino-acid chain; its full sequence is Endoplasmic reticulum membrane sensor NFE2L1 (741 aa).

Residues 7 to 24 (YLTEGLLQFTILLSLIGV) traverse the membrane as a helical; Signal-anchor for type II membrane protein segment. Disordered stretches follow at residues 108–148 (DPEG…TEQG) and 198–220 (QKEQDVDKELQDGREREDTWSGE). Polar residues predominate over residues 113–131 (VSGSQPNSGLALESSSGLQ). A cholesterol recognition/amino acid consensus (CRAC) region region spans residues 191-199 (VFDYSHRQK). Positions 198–216 (QKEQDVDKELQDGREREDT) are enriched in basic and acidic residues. N-linked (GlcNAc...) asparagine glycosylation is found at N319 and N331. The CPD stretch occupies residues 350–354 (SPEVE). The N-linked (GlcNAc...) asparagine glycan is linked to N394. 2 disordered regions span residues 441-501 (EEEF…DSET) and 551-582 (SALDSADLPPPSTLKKGSKEKQADFLDKQMSR). A Destruction motif motif is present at residues 447-451 (DSGLS). Residues 447 to 492 (DSGLSLDSSHSPSSLSSSEGSSSSSSSSSSSSASSSASSSFSEEGA) are compositionally biased toward low complexity. S497 carries the post-translational modification Phosphoserine; by CK2. Basic and acidic residues predominate over residues 567 to 582 (GSKEKQADFLDKQMSR). Phosphoserine is present on S568. A bZIP domain is found at 623-686 (LIRDIRRRGK…RQMKQKVQSL (64 aa)). Residues 625 to 644 (RDIRRRGKNKMAAQNCRKRK) are basic motif. The tract at residues 651–665 (LERDVEDLQRDKARL) is leucine-zipper. The segment at 722 to 741 (RTMADQQARRQERKPKDRRK) is disordered. The Nuclear localization signal motif lies at 730–737 (RRQERKPK). Residues 732 to 741 (QERKPKDRRK) are compositionally biased toward basic residues.

Belongs to the bZIP family. CNC subfamily. In terms of assembly, interacts with KEAP1. As to quaternary structure, interacts (via CPD region) with FBXW7; leading to its ubiquitination and degradation. Interacts with SYVN1/HRD1; leading to its ubiquitination and degradation. Interacts (when ubiquitinated) with DDI2; leading to its cleavage. Interacts (via the bZIP domain) with small MAF protein (MAFF, MAFG or MAFK); required for binding to antioxidant response elements (AREs) on DNA. Interacts (via Destruction motif) with BTRC; leading to its ubiquitination and degradation. Interacts with CEBPB; the heterodimer represses expression of DSPP during odontoblast differentiation. Interacts with MOTS-c, a peptide produced by the mitochondrially encoded 12S rRNA MT-RNR1. Cleaved at Leu-104 by the aspartyl protease DDI2 following retrotranslocation, releasing the protein from the endoplasmic reticulum membrane and forming the transcription factor NRF1 that translocates into the nucleus. Ubiquitination is prerequisite for cleavage by aspartyl protease DDI2. Post-translationally, N-glycosylated in normal conditions, when it has a single-pass type II membrane protein topology, with the DNA-binding domain facing the endoplasmic reticulum lumen. Deglycosylated during retrotranslocation to the cytosolic side of the membrane, to have a single-pass type III membrane protein topology with the major part of the protein facing the cytosol. In terms of processing, ubiquitinated by the SCF(FBXW7) complex and SYVN1/HRD1, leading to its degradation by the proteasome. Ubiquitinated during retrotranslocation to the cytosolic side of the membrane: ubiquitination does not lead to degradation and is required for processing by the aspartyl protease DDI2 and subsequent release from the endoplasmic reticulum membrane. Phosphorylation by CK2 at Ser-497 inhibits transcription factor activity, possibly by affecting DNA-binding activity. Phosphorylation at Ser-568 is required for interaction with CEBPB. Post-translationally, ubiquitinated by the SCF(BTRC) complex in the nucleus, leading to its degradation by the proteasome. In terms of tissue distribution, isoform 1: Widely expressed including kidney, brown fat, white fat, large intestine, small intestine, stomach, lung, brain and liver. Isoform 1: Expressed in mouse embryonic fibroblasts (MEF). Isoform 2: Widely expressed including kidney, brown fat, white fat, large intestine, small intestine, stomach, lung, brain and liver. Isoform 2: levels in white fat, lung and liver are increased compared to isoform 1 (at protein level). Isoform 2: levels are elevated in brown fat and brain, but are reduced in liver compared to isoform 1 levels. Isoform 2: Expressed in mouse embryonic fibroblasts (MEF).

The protein localises to the endoplasmic reticulum membrane. Its subcellular location is the nucleus. It localises to the cytoplasm. Functionally, endoplasmic reticulum membrane sensor that translocates into the nucleus in response to various stresses to act as a transcription factor. Constitutes a precursor of the transcription factor NRF1. Able to detect various cellular stresses, such as cholesterol excess, oxidative stress or proteasome inhibition. In response to stress, it is released from the endoplasmic reticulum membrane following cleavage by the protease DDI2 and translocates into the nucleus to form the transcription factor NRF1. Acts as a key sensor of cholesterol excess: in excess cholesterol conditions, the endoplasmic reticulum membrane form of the protein directly binds cholesterol via its CRAC motif, preventing cleavage and release of the transcription factor NRF1, thereby allowing expression of genes promoting cholesterol removal, such as CD36. Involved in proteasome homeostasis: in response to proteasome inhibition, it is released from the endoplasmic reticulum membrane, translocates to the nucleus and activates expression of genes encoding proteasome subunits. In terms of biological role, CNC-type bZIP family transcription factor that translocates to the nucleus and regulates expression of target genes in response to various stresses. Heterodimerizes with small-Maf proteins (MAFF, MAFG or MAFK) and binds DNA motifs including the antioxidant response elements (AREs), which regulate expression of genes involved in oxidative stress response. Activates or represses expression of target genes, depending on the context. Plays a key role in cholesterol homeostasis by acting as a sensor of cholesterol excess: in low cholesterol conditions, translocates into the nucleus and represses expression of genes involved in defense against cholesterol excess, such as CD36. In excess cholesterol conditions, the endoplasmic reticulum membrane form of the protein directly binds cholesterol via its CRAC motif, preventing cleavage and release of the transcription factor NRF1, thereby allowing expression of genes promoting cholesterol removal. Critical for redox balance in response to oxidative stress: acts by binding the AREs motifs on promoters and mediating activation of oxidative stress response genes, such as GCLC, GCLM, GSS, MT1 and MT2. Plays an essential role during fetal liver hematopoiesis: probably has a protective function against oxidative stress and is involved in lipid homeostasis in the liver. Involved in proteasome homeostasis: in response to proteasome inhibition, mediates the 'bounce-back' of proteasome subunits by translocating into the nucleus and activating expression of genes encoding proteasome subunits. Also involved in regulating glucose flux. Together with CEBPB; represses expression of DSPP during odontoblast differentiation. In response to ascorbic acid induction, activates expression of SP7/Osterix in osteoblasts. Transcription factor that binds the antioxidant response elements (ARE) consensus sequence on promoters and activates their expression. Its function is as follows. Transcription factor that binds the extended kappa 3 site of the TNF-alpha promoter after Fc gamma RIII stimulation and participates in the induction of this cytokine. In Mus musculus (Mouse), this protein is Endoplasmic reticulum membrane sensor NFE2L1.